The following is a 227-amino-acid chain: PKHD-type hydroxylase A1S_0473 (227 aa).

The region spanning 78–178 (KIIPPLFNRY…RFASFFWVQS (101 aa)) is the Fe2OG dioxygenase domain. His-96, Asp-98, and His-159 together coordinate Fe cation. Arg-169 provides a ligand contact to 2-oxoglutarate.

Requires Fe(2+) as cofactor. It depends on L-ascorbate as a cofactor.

The chain is PKHD-type hydroxylase A1S_0473 from Acinetobacter baumannii (strain ATCC 17978 / DSM 105126 / CIP 53.77 / LMG 1025 / NCDC KC755 / 5377).